Consider the following 420-residue polypeptide: Protein-lysine 6-oxidase (420 aa).

The N-terminal stretch at 1–27 (MRCAPPGLLLAQLHACIFWSGLWPAGC) is a signal peptide. A propeptide spans 28–171 (QSPPAAWRQR…RPGREDVMVG (144 aa)) (removed by BMP1). Positions 54 to 177 (AQYQPPRRRQ…VMVGDDPYSP (124 aa)) are disordered. The N-linked (GlcNAc...) asparagine glycan is linked to Asn-78. Over residues 82–92 (PRAAAAAAARP) the composition is skewed to low complexity. Over residues 93–105 (QPEPQPQAQPQPR) the composition is skewed to pro residues. Composition is skewed to basic residues over residues 107 to 119 (RSSR…RRHW) and 134 to 147 (APRR…SRRR). Tyr-190 bears the Sulfotyrosine mark. A lysyl-oxidase like region spans residues 216–420 (PDLVPDPYYI…YASGCTISPY (205 aa)). Cystine bridges form between Cys-241–Cys-247, Cys-294–Cys-343, Cys-327–Cys-333, Cys-354–Cys-364, and Cys-401–Cys-415. Residues His-295, His-297, and His-299 each coordinate Cu cation. A cross-link (lysine tyrosylquinone (Lys-Tyr)) is located at residues 323 to 358 (KASFCLEDTSCDYGYYRRYACTAHTQGLSPGCYDTY). At Tyr-358 the chain carries 2',4',5'-topaquinone.

It belongs to the lysyl oxidase family. Cu cation is required as a cofactor. Lysine tyrosylquinone residue serves as cofactor. Post-translationally, the lysine tyrosylquinone cross-link (LTQ) is generated by condensation of the epsilon-amino group of a lysine with a topaquinone produced by oxidation of tyrosine. In terms of processing, proteolytically cleaved by BMP1 which removes the propeptide. Also proteolytically cleaved by ADAMTS2 and ADAMTS14, but not by ADAMTS3, at an additional cleavage site downstream of the BMP1 cleavage site. The propeptide plays a role in directing the deposition of this enzyme to elastic fibers, via interaction with tropoelastin. Cleavage by BMP1 to remove the propeptide does not increase enzymatic activity but increases binding to collagen. Cleavage by ADAMTS2 produces a form with reduced collagen-binding activity. Sulfated at Tyr-190 and also at either Tyr-186 or Tyr-187 which enhances binding to collagen.

The protein resides in the secreted. It is found in the extracellular space. The enzyme catalyses L-lysyl-[protein] + O2 + H2O = (S)-2-amino-6-oxohexanoyl-[protein] + H2O2 + NH4(+). In terms of biological role, responsible for the post-translational oxidative deamination of peptidyl lysine residues in precursors to fibrous collagen and elastin. Its function is as follows. In addition to cross linking of extracellular matrix proteins, it may have a direct role in tumor suppression. The protein is Protein-lysine 6-oxidase (LOX) of Gallus gallus (Chicken).